The sequence spans 241 residues: Phosphoglycolate phosphatase (241 aa).

Asp-8 (nucleophile) is an active-site residue. Asp-8, Asp-10, and Asp-174 together coordinate Mg(2+).

Belongs to the HAD-like hydrolase superfamily. CbbY/CbbZ/Gph/YieH family. Mg(2+) is required as a cofactor.

The catalysed reaction is 2-phosphoglycolate + H2O = glycolate + phosphate. The protein operates within organic acid metabolism; glycolate biosynthesis; glycolate from 2-phosphoglycolate: step 1/1. Specifically catalyzes the dephosphorylation of 2-phosphoglycolate. Is involved in the dissimilation of the intracellular 2-phosphoglycolate formed during the DNA repair of 3'-phosphoglycolate ends, a major class of DNA lesions induced by oxidative stress. The polypeptide is Phosphoglycolate phosphatase (Rhodospirillum rubrum (strain ATCC 11170 / ATH 1.1.1 / DSM 467 / LMG 4362 / NCIMB 8255 / S1)).